The following is a 166-amino-acid chain: Large ribosomal subunit protein uL10 (166 aa).

It belongs to the universal ribosomal protein uL10 family. In terms of assembly, part of the ribosomal stalk of the 50S ribosomal subunit. The N-terminus interacts with L11 and the large rRNA to form the base of the stalk. The C-terminus forms an elongated spine to which L12 dimers bind in a sequential fashion forming a multimeric L10(L12)X complex.

Functionally, forms part of the ribosomal stalk, playing a central role in the interaction of the ribosome with GTP-bound translation factors. This chain is Large ribosomal subunit protein uL10, found in Tropheryma whipplei (strain TW08/27) (Whipple's bacillus).